The chain runs to 280 residues: 4-hydroxy-3-methylbut-2-enyl diphosphate reductase (280 aa).

Cysteine 12 is a binding site for [4Fe-4S] cluster. Positions 40 and 72 each coordinate (2E)-4-hydroxy-3-methylbut-2-enyl diphosphate. The dimethylallyl diphosphate site is built by histidine 40 and histidine 72. The isopentenyl diphosphate site is built by histidine 40 and histidine 72. Cysteine 94 contacts [4Fe-4S] cluster. Histidine 122 serves as a coordination point for (2E)-4-hydroxy-3-methylbut-2-enyl diphosphate. Histidine 122 serves as a coordination point for dimethylallyl diphosphate. Histidine 122 contributes to the isopentenyl diphosphate binding site. Glutamate 124 serves as the catalytic Proton donor. Threonine 160 serves as a coordination point for (2E)-4-hydroxy-3-methylbut-2-enyl diphosphate. Cysteine 188 serves as a coordination point for [4Fe-4S] cluster. Residues serine 216, asparagine 218, and serine 260 each contribute to the (2E)-4-hydroxy-3-methylbut-2-enyl diphosphate site. Residues serine 216, asparagine 218, and serine 260 each contribute to the dimethylallyl diphosphate site. Isopentenyl diphosphate contacts are provided by serine 216, asparagine 218, and serine 260.

Belongs to the IspH family. It depends on [4Fe-4S] cluster as a cofactor.

The enzyme catalyses isopentenyl diphosphate + 2 oxidized [2Fe-2S]-[ferredoxin] + H2O = (2E)-4-hydroxy-3-methylbut-2-enyl diphosphate + 2 reduced [2Fe-2S]-[ferredoxin] + 2 H(+). It carries out the reaction dimethylallyl diphosphate + 2 oxidized [2Fe-2S]-[ferredoxin] + H2O = (2E)-4-hydroxy-3-methylbut-2-enyl diphosphate + 2 reduced [2Fe-2S]-[ferredoxin] + 2 H(+). Its pathway is isoprenoid biosynthesis; dimethylallyl diphosphate biosynthesis; dimethylallyl diphosphate from (2E)-4-hydroxy-3-methylbutenyl diphosphate: step 1/1. It functions in the pathway isoprenoid biosynthesis; isopentenyl diphosphate biosynthesis via DXP pathway; isopentenyl diphosphate from 1-deoxy-D-xylulose 5-phosphate: step 6/6. Catalyzes the conversion of 1-hydroxy-2-methyl-2-(E)-butenyl 4-diphosphate (HMBPP) into a mixture of isopentenyl diphosphate (IPP) and dimethylallyl diphosphate (DMAPP). Acts in the terminal step of the DOXP/MEP pathway for isoprenoid precursor biosynthesis. The chain is 4-hydroxy-3-methylbut-2-enyl diphosphate reductase from Pelobacter propionicus (strain DSM 2379 / NBRC 103807 / OttBd1).